The chain runs to 476 residues: Calcium uptake protein 1, mitochondrial (476 aa).

Residues 1–33 constitute a mitochondrion transit peptide; that stretch reads MFRLNSLSALAELAVGSRWYHGGSQPIQIRRRL. The interval 68-106 is disordered; that stretch reads SDIGDKGKNKDEGDVCNHEKKTADLAPHPEEKKKKRSGF. Positions 99–110 are polybasic region; the sequence is KKKKRSGFRDRK. Phosphoserine is present on serine 122. The k/R-ring stretch occupies residues 126–129; that stretch reads KIFR. Residues 218–253 enclose the EF-hand 1 domain; the sequence is TPQRNFEIAFKMFDLNGDGEVDMEEFEQVQSIIRSQ. Ca(2+) is bound by residues aspartate 231, asparagine 233, aspartate 235, glutamate 237, and glutamate 242. The interval 259–263 is k/R-ring; sequence RHRDR. One can recognise an EF-hand 2 domain in the interval 408-443; that stretch reads LSDHVCDVVFALFDCDGNGELSNKEFVSIMKQRLMR. Ca(2+)-binding residues include aspartate 421, aspartate 423, asparagine 425, glutamate 427, and glutamate 432. Arginine 455 bears the Asymmetric dimethylarginine mark. Residues 455 to 465 are C-helix region; the sequence is RLMQAMWKCAQ.

The protein belongs to the MICU1 family. MICU1 subfamily. As to quaternary structure, heterodimer; disulfide-linked; heterodimerizes with MICU2 or MICU3. Homodimer; disulfide-linked. Component of the uniplex complex, composed of MCU, EMRE/SMDT1, MICU1 and MICU2 (or MICU3) in a 4:4:1:1 stoichiometry. The composition of calcium sensors within the uniplex complex can differ depending on tissues: a MICU1 homodimer can be present instead of the MICU1-MICU2 heterodimer in skeletal-muscle and kidney. MICU1 is recruited to the uniplex complex by EMRE/SMDT1, and it associates with MCU at low calcium levels, occluding the pore of the MCU channel. Associates with the MICOS complex. Interacts with SLC25A23. Interacts with CHCHD4/MIA40; which introduces the interchain disulfide bond with MICU2. Interacts (when methylated) with UCP2; leading to decrease the calcium sensitivity of MICU1. Post-translationally, phosphorylation at Ser-122 by AKT1 impairs its maturation and stability. In terms of processing, asymmetric dimethylation at Arg-455 by PRMT1 decreases the calcium sensitivity of MICU1 by promoting interaction with UCP2. Degraded by YME1L1 when not complexed as homodimer or heterodimer. Not degraded when complexed as homodimer or heterodimer; the presence of the interchain disulfide bond protecting MICU1 from degradation by YME1L1. In terms of tissue distribution, expressed in epithelial cell lines. Strongly expressed in epidermal keratinocytes and dermal endothelial cells.

It localises to the mitochondrion intermembrane space. Its subcellular location is the mitochondrion inner membrane. Activated by spermine, kaempferol and SB202190, which bind MICU1 and prevent MCU pore occlusion in absence of calcium. In terms of biological role, calcium sensor of the mitochondrial calcium uniporter (MCU) channel, which senses calcium level via its EF-hand domains. MICU1 and MICU2 (or MICU3) form a disulfide-linked heterodimer that stimulates and inhibits MCU activity, depending on the concentration of calcium. At low calcium levels, MICU1 occludes the pore of the MCU channel, preventing mitochondrial calcium uptake. At higher calcium levels, calcium-binding to MICU1 and MICU2 (or MICU3) induces a conformational change that weakens MCU-MICU1 interactions and moves the MICU1-MICU2 heterodimer away from the pore, allowing calcium permeation through the MCU channel. Also required to protect against manganese toxicity by preventing manganese uptake by MCU: mechanistically, manganese-binding to its EF-hand domains does not induce any conformational change, maintaining MCU pore occlusion. Also acts as a barrier for inhibitors of the MCU channel, such as ruthenium red or its derivative Ru360. Acts as a regulator of mitochondrial cristae structure independently of its ability to regulate the mitochondrial calcium uniporter channel. Regulates glucose-dependent insulin secretion in pancreatic beta-cells by regulating mitochondrial calcium uptake. Induces T-helper 1-mediated autoreactivity, which is accompanied by the release of IFNG. Isoform that regulates mitochondrial calcium uniporter (MCU) in the skeletal muscle. Compared to other isoforms, this isoform has higher affinity for calcium, promoting mitochondrial calcium uptake at lower calcium concentrations. This allows a rapid response of mitochondrial metabolism and ensures sustained ATP production needed for resistance and strenuous exercise. The polypeptide is Calcium uptake protein 1, mitochondrial (Homo sapiens (Human)).